The primary structure comprises 170 residues: Protein AIG2 A (170 aa).

15–20 serves as a coordination point for substrate; it reads YGSFQE. Catalysis depends on E83, which acts as the Proton acceptor. Residues 147 to 162 are compositionally biased toward basic and acidic residues; sequence KNPNGRSREEFEKFVQ. The interval 147 to 170 is disordered; sequence KNPNGRSREEFEKFVQDDSSPASA.

This sequence belongs to the gamma-glutamylcyclotransferase family. As to expression, ubiquitous.

Putative gamma-glutamylcyclotransferase. The sequence is that of Protein AIG2 A from Arabidopsis thaliana (Mouse-ear cress).